Here is a 64-residue protein sequence, read N- to C-terminus: DNA gyrase inhibitor YacG (64 aa).

Positions 9, 12, 28, and 32 each coordinate Zn(2+). Residues 45 to 64 (KRIPSSGDLSESDDWSEEQK) form a disordered region. Acidic residues predominate over residues 54–64 (SESDDWSEEQK).

This sequence belongs to the DNA gyrase inhibitor YacG family. Interacts with GyrB. It depends on Zn(2+) as a cofactor.

Its function is as follows. Inhibits all the catalytic activities of DNA gyrase by preventing its interaction with DNA. Acts by binding directly to the C-terminal domain of GyrB, which probably disrupts DNA binding by the gyrase. The protein is DNA gyrase inhibitor YacG of Citrobacter koseri (strain ATCC BAA-895 / CDC 4225-83 / SGSC4696).